The primary structure comprises 261 residues: Cytosolic Fe-S cluster assembly factor Nubp2 homolog (261 aa).

14–21 (GKGGVGKS) provides a ligand contact to ATP. Positions 188 and 191 each coordinate [4Fe-4S] cluster.

The protein belongs to the Mrp/NBP35 ATP-binding proteins family. NUBP2/CFD1 subfamily. Heterotetramer of 2 Nubp1 and 2 Nubp2 chains. [4Fe-4S] cluster serves as cofactor.

The protein resides in the cytoplasm. Its function is as follows. Component of the cytosolic iron-sulfur (Fe/S) protein assembly (CIA) machinery. Required for maturation of extramitochondrial Fe-S proteins. The Nubp1-Nubp2 heterotetramer forms a Fe-S scaffold complex, mediating the de novo assembly of an Fe-S cluster and its transfer to target apoproteins. This Drosophila willistoni (Fruit fly) protein is Cytosolic Fe-S cluster assembly factor Nubp2 homolog.